We begin with the raw amino-acid sequence, 201 residues long: MQGTVESQGTAIAVDHAHEHPDFRVLGLLVFLISESLMFGGLFAAYLLLRGMHEQWPPEGTEVELFVPTINTLILISSSFVIHYGDVAIKKDDVRGMRKWYWITAAMGAVFLGGQVYEYLTLGYGLRTNVFANCFYVMTGFHGLHVFIGILLILGVIWRSRRPGHYNAQKHTGVAMAEIYWHFVDVIWIILFTLLYILTRF.

A run of 4 helical transmembrane segments spans residues 25 to 45, 65 to 85, 100 to 120, and 137 to 157; these read VLGL…LFAA, LFVP…IHYG, WYWI…YEYL, and VMTG…LGVI.

It belongs to the cytochrome c oxidase subunit 3 family.

It is found in the cell membrane. The enzyme catalyses 4 Fe(II)-[cytochrome c] + O2 + 8 H(+)(in) = 4 Fe(III)-[cytochrome c] + 2 H2O + 4 H(+)(out). In Thermostichus vulcanus (Synechococcus vulcanus), this protein is Cytochrome c oxidase subunit 3 (ctaE).